A 322-amino-acid chain; its full sequence is HPr kinase/phosphorylase (322 aa).

Residues H146 and K167 contribute to the active site. ATP is bound at residue 161-168; it reads GDSGLGKS. S168 is a binding site for Mg(2+). The active-site Proton acceptor; for phosphorylation activity. Proton donor; for dephosphorylation activity is the D185. The tract at residues 209 to 218 is important for the catalytic mechanism of both phosphorylation and dephosphorylation; sequence LEVRGLGLLD. E210 contributes to the Mg(2+) binding site. Residue R250 is part of the active site. Positions 271–276 are important for the catalytic mechanism of dephosphorylation; it reads QVAAGR.

This sequence belongs to the HPrK/P family. Homohexamer. Requires Mg(2+) as cofactor.

It carries out the reaction [HPr protein]-L-serine + ATP = [HPr protein]-O-phospho-L-serine + ADP + H(+). It catalyses the reaction [HPr protein]-O-phospho-L-serine + phosphate + H(+) = [HPr protein]-L-serine + diphosphate. Functionally, catalyzes the ATP- as well as the pyrophosphate-dependent phosphorylation of a specific serine residue in HPr, a phosphocarrier protein of the phosphoenolpyruvate-dependent sugar phosphotransferase system (PTS). HprK/P also catalyzes the pyrophosphate-producing, inorganic phosphate-dependent dephosphorylation (phosphorolysis) of seryl-phosphorylated HPr (P-Ser-HPr). The polypeptide is HPr kinase/phosphorylase (Paraburkholderia xenovorans (strain LB400)).